Consider the following 273-residue polypeptide: Large ribosomal subunit protein uL2cz/uL2cy (273 aa).

Disordered stretches follow at residues 1–23 (MAIH…SQVK) and 224–273 (NPVD…RRRK). Residues 262–273 (KYSDRFILRRRK) show a composition bias toward basic and acidic residues.

Belongs to the universal ribosomal protein uL2 family. In terms of assembly, part of the 50S ribosomal subunit.

It localises to the plastid. Its subcellular location is the chloroplast. In Acorus calamus var. americanus (American sweet flag), this protein is Large ribosomal subunit protein uL2cz/uL2cy (rpl2-A).